The primary structure comprises 87 residues: Large ribosomal subunit protein bL27 (87 aa).

Positions 1–21 are disordered; it reads MAHKKGGGSTRNGRDSASKRL.

The protein belongs to the bacterial ribosomal protein bL27 family.

This is Large ribosomal subunit protein bL27 from Amoebophilus asiaticus (strain 5a2).